Consider the following 464-residue polypeptide: Soluble pyridine nucleotide transhydrogenase (464 aa).

FAD is bound at residue 35 to 44 (DNRPLVGGNC).

Belongs to the class-I pyridine nucleotide-disulfide oxidoreductase family. FAD serves as cofactor.

It localises to the cytoplasm. The catalysed reaction is NAD(+) + NADPH = NADH + NADP(+). Functionally, conversion of NADPH, generated by peripheral catabolic pathways, to NADH, which can enter the respiratory chain for energy generation. The sequence is that of Soluble pyridine nucleotide transhydrogenase from Stutzerimonas stutzeri (strain A1501) (Pseudomonas stutzeri).